Consider the following 308-residue polypeptide: 4-hydroxy-3-methylbut-2-enyl diphosphate reductase (308 aa).

C13 is a [4Fe-4S] cluster binding site. H42 and H75 together coordinate (2E)-4-hydroxy-3-methylbut-2-enyl diphosphate. Dimethylallyl diphosphate is bound by residues H42 and H75. Positions 42 and 75 each coordinate isopentenyl diphosphate. C97 contributes to the [4Fe-4S] cluster binding site. H125 contacts (2E)-4-hydroxy-3-methylbut-2-enyl diphosphate. H125 is a dimethylallyl diphosphate binding site. H125 is an isopentenyl diphosphate binding site. E127 (proton donor) is an active-site residue. (2E)-4-hydroxy-3-methylbut-2-enyl diphosphate is bound at residue T165. C195 is a [4Fe-4S] cluster binding site. Residues S223, S224, N225, and S267 each contribute to the (2E)-4-hydroxy-3-methylbut-2-enyl diphosphate site. The dimethylallyl diphosphate site is built by S223, S224, N225, and S267. Isopentenyl diphosphate contacts are provided by S223, S224, N225, and S267.

This sequence belongs to the IspH family. [4Fe-4S] cluster serves as cofactor.

It carries out the reaction isopentenyl diphosphate + 2 oxidized [2Fe-2S]-[ferredoxin] + H2O = (2E)-4-hydroxy-3-methylbut-2-enyl diphosphate + 2 reduced [2Fe-2S]-[ferredoxin] + 2 H(+). The catalysed reaction is dimethylallyl diphosphate + 2 oxidized [2Fe-2S]-[ferredoxin] + H2O = (2E)-4-hydroxy-3-methylbut-2-enyl diphosphate + 2 reduced [2Fe-2S]-[ferredoxin] + 2 H(+). It functions in the pathway isoprenoid biosynthesis; dimethylallyl diphosphate biosynthesis; dimethylallyl diphosphate from (2E)-4-hydroxy-3-methylbutenyl diphosphate: step 1/1. It participates in isoprenoid biosynthesis; isopentenyl diphosphate biosynthesis via DXP pathway; isopentenyl diphosphate from 1-deoxy-D-xylulose 5-phosphate: step 6/6. Its function is as follows. Catalyzes the conversion of 1-hydroxy-2-methyl-2-(E)-butenyl 4-diphosphate (HMBPP) into a mixture of isopentenyl diphosphate (IPP) and dimethylallyl diphosphate (DMAPP). Acts in the terminal step of the DOXP/MEP pathway for isoprenoid precursor biosynthesis. This Chlamydia muridarum (strain MoPn / Nigg) protein is 4-hydroxy-3-methylbut-2-enyl diphosphate reductase.